Consider the following 260-residue polypeptide: Aliphatic sulfonates import ATP-binding protein SsuB 1 (260 aa).

The region spanning 29–243 (VRVDGLTRSF…DITDPRFAEL (215 aa)) is the ABC transporter domain. Residue 61-68 (GRSGCGKS) participates in ATP binding.

It belongs to the ABC transporter superfamily. Aliphatic sulfonates importer (TC 3.A.1.17.2) family. The complex is composed of two ATP-binding proteins (SsuB), two transmembrane proteins (SsuC) and a solute-binding protein (SsuA).

The protein resides in the cell membrane. The enzyme catalyses ATP + H2O + aliphatic sulfonate-[sulfonate-binding protein]Side 1 = ADP + phosphate + aliphatic sulfonateSide 2 + [sulfonate-binding protein]Side 1.. Functionally, part of the ABC transporter complex SsuABC involved in aliphatic sulfonates import. Responsible for energy coupling to the transport system. In Streptomyces avermitilis (strain ATCC 31267 / DSM 46492 / JCM 5070 / NBRC 14893 / NCIMB 12804 / NRRL 8165 / MA-4680), this protein is Aliphatic sulfonates import ATP-binding protein SsuB 1.